Reading from the N-terminus, the 568-residue chain is 2-succinyl-5-enolpyruvyl-6-hydroxy-3-cyclohexene-1-carboxylate synthase (568 aa).

Belongs to the TPP enzyme family. MenD subfamily. As to quaternary structure, homodimer. The cofactor is Mg(2+). Requires Mn(2+) as cofactor. Thiamine diphosphate serves as cofactor.

It catalyses the reaction isochorismate + 2-oxoglutarate + H(+) = 5-enolpyruvoyl-6-hydroxy-2-succinyl-cyclohex-3-ene-1-carboxylate + CO2. It functions in the pathway quinol/quinone metabolism; 1,4-dihydroxy-2-naphthoate biosynthesis; 1,4-dihydroxy-2-naphthoate from chorismate: step 2/7. It participates in quinol/quinone metabolism; menaquinone biosynthesis. Its function is as follows. Catalyzes the thiamine diphosphate-dependent decarboxylation of 2-oxoglutarate and the subsequent addition of the resulting succinic semialdehyde-thiamine pyrophosphate anion to isochorismate to yield 2-succinyl-5-enolpyruvyl-6-hydroxy-3-cyclohexene-1-carboxylate (SEPHCHC). The chain is 2-succinyl-5-enolpyruvyl-6-hydroxy-3-cyclohexene-1-carboxylate synthase from Mannheimia succiniciproducens (strain KCTC 0769BP / MBEL55E).